Here is a 151-residue protein sequence, read N- to C-terminus: Large ribosomal subunit protein bL9 (151 aa).

The protein belongs to the bacterial ribosomal protein bL9 family.

Its function is as follows. Binds to the 23S rRNA. This chain is Large ribosomal subunit protein bL9, found in Dehalococcoides mccartyi (strain ATCC BAA-2100 / JCM 16839 / KCTC 5957 / BAV1).